The chain runs to 860 residues: Leucine--tRNA ligase (860 aa).

Positions 42 to 52 match the 'HIGH' region motif; sequence PYPSGRLHMGH. The 'KMSKS' region motif lies at 619–623; the sequence is KMSKS. Lysine 622 contributes to the ATP binding site.

Belongs to the class-I aminoacyl-tRNA synthetase family.

It is found in the cytoplasm. The catalysed reaction is tRNA(Leu) + L-leucine + ATP = L-leucyl-tRNA(Leu) + AMP + diphosphate. This chain is Leucine--tRNA ligase, found in Erwinia tasmaniensis (strain DSM 17950 / CFBP 7177 / CIP 109463 / NCPPB 4357 / Et1/99).